The sequence spans 295 residues: Cytidine deaminase (295 aa).

2 consecutive CMP/dCMP-type deaminase domains span residues 48 to 168 and 187 to 295; these read TDSE…FGPA and KETD…YVAA. 89–91 contacts substrate; sequence NME. Histidine 102 serves as a coordination point for Zn(2+). The Proton donor role is filled by glutamate 104. The Zn(2+) site is built by cysteine 129 and cysteine 132.

Belongs to the cytidine and deoxycytidylate deaminase family. Homodimer. The cofactor is Zn(2+).

It carries out the reaction cytidine + H2O + H(+) = uridine + NH4(+). The enzyme catalyses 2'-deoxycytidine + H2O + H(+) = 2'-deoxyuridine + NH4(+). In terms of biological role, this enzyme scavenges exogenous and endogenous cytidine and 2'-deoxycytidine for UMP synthesis. The polypeptide is Cytidine deaminase (Photobacterium profundum (strain SS9)).